The primary structure comprises 140 residues: Large ribosomal subunit protein uL16 (140 aa).

Residues 1–16 are compositionally biased toward basic residues; the sequence is MLMPKRVKHRKQMKGR. The disordered stretch occupies residues 1–20; it reads MLMPKRVKHRKQMKGRMKGD.

The protein belongs to the universal ribosomal protein uL16 family. As to quaternary structure, part of the 50S ribosomal subunit.

Its function is as follows. Binds 23S rRNA and is also seen to make contacts with the A and possibly P site tRNAs. The chain is Large ribosomal subunit protein uL16 from Geobacter sulfurreducens (strain ATCC 51573 / DSM 12127 / PCA).